The primary structure comprises 62 residues: Photosystem II reaction center protein Z (62 aa).

Methionine 1 bears the N-formylmethionine mark. Residues 1 to 4 are Lumenal-facing; that stretch reads MTIL. Residues 5-25 traverse the membrane as a helical segment; that stretch reads FQLALAALVILSFVMVIGVPV. The Cytoplasmic segment spans residues 26–36; it reads AYASPQDWDRS. The helical transmembrane segment at 37–58 threads the bilayer; that stretch reads KQLIFLGSGLWIALVLVVGVLN. At 59–62 the chain is on the lumenal side; the sequence is FFVV.

It belongs to the PsbZ family. PSII is composed of 1 copy each of membrane proteins PsbA, PsbB, PsbC, PsbD, PsbE, PsbF, PsbH, PsbI, PsbJ, PsbK, PsbL, PsbM, PsbT, PsbX, PsbY, PsbZ, Psb30/Ycf12, peripheral proteins PsbO, CyanoQ (PsbQ), PsbU, PsbV and a large number of cofactors. It forms dimeric complexes. Part of a photosystem II (PSII) assembly intermediate complex PSII-I; crystallized from a strain deleted of psbJ, it forms monomeric PSII before addition of the oxygen evolving complex. PSII-I includes 3 assembly factors not found in mature PSII (Psb27, Psb28 and Psb34). PSII binds multiple chlorophylls, carotenoids and specific lipids. serves as cofactor.

It is found in the cellular thylakoid membrane. Functionally, may control the interaction of photosystem II (PSII) cores with the light-harvesting antenna, regulates electron flow through the 2 photosystem reaction centers. PSII is a light-driven water plastoquinone oxidoreductase, using light energy to abstract electrons from H(2)O, generating a proton gradient subsequently used for ATP formation. Its function is as follows. May also aid in binding of PsbK, Psb30/Ycf12 and the oxygen-evolving complex to PSII, at least in vitro. The sequence is that of Photosystem II reaction center protein Z from Thermosynechococcus vestitus (strain NIES-2133 / IAM M-273 / BP-1).